Here is a 133-residue protein sequence, read N- to C-terminus: ATP synthase epsilon chain (133 aa).

It belongs to the ATPase epsilon chain family. As to quaternary structure, F-type ATPases have 2 components, CF(1) - the catalytic core - and CF(0) - the membrane proton channel. CF(1) has five subunits: alpha(3), beta(3), gamma(1), delta(1), epsilon(1). CF(0) has three main subunits: a, b and c.

It localises to the cell membrane. In terms of biological role, produces ATP from ADP in the presence of a proton gradient across the membrane. The protein is ATP synthase epsilon chain of Bacillus mycoides (strain KBAB4) (Bacillus weihenstephanensis).